The chain runs to 264 residues: Shikimate dehydrogenase (NADP(+)) (264 aa).

Residues 14–16 (SLS) and threonine 59 contribute to the shikimate site. Residue lysine 63 is the Proton acceptor of the active site. Position 75 (glutamate 75) interacts with NADP(+). Shikimate is bound by residues asparagine 84 and aspartate 99. Residues 122–126 (GAGGA), 144–149 (NRTPSK), and isoleucine 205 each bind NADP(+). Tyrosine 207 lines the shikimate pocket. Position 228 (glycine 228) interacts with NADP(+).

The protein belongs to the shikimate dehydrogenase family. In terms of assembly, homodimer.

The catalysed reaction is shikimate + NADP(+) = 3-dehydroshikimate + NADPH + H(+). Its pathway is metabolic intermediate biosynthesis; chorismate biosynthesis; chorismate from D-erythrose 4-phosphate and phosphoenolpyruvate: step 4/7. Its function is as follows. Involved in the biosynthesis of the chorismate, which leads to the biosynthesis of aromatic amino acids. Catalyzes the reversible NADPH linked reduction of 3-dehydroshikimate (DHSA) to yield shikimate (SA). This is Shikimate dehydrogenase (NADP(+)) from Pyrococcus abyssi (strain GE5 / Orsay).